Consider the following 311-residue polypeptide: Glycerol-3-phosphate dehydrogenase [NAD(P)+] (311 aa).

Residues Trp12, Arg31, Arg32, and Lys96 each coordinate NADPH. Positions 96, 124, and 126 each coordinate sn-glycerol 3-phosphate. Ala128 is an NADPH binding site. Sn-glycerol 3-phosphate-binding residues include Lys178, Asp231, Ser241, Arg242, and Asn243. Lys178 (proton acceptor) is an active-site residue. Residue Arg242 coordinates NADPH. Residues Val266 and Glu268 each contribute to the NADPH site.

Belongs to the NAD-dependent glycerol-3-phosphate dehydrogenase family.

The protein resides in the cytoplasm. The catalysed reaction is sn-glycerol 3-phosphate + NAD(+) = dihydroxyacetone phosphate + NADH + H(+). It carries out the reaction sn-glycerol 3-phosphate + NADP(+) = dihydroxyacetone phosphate + NADPH + H(+). Its pathway is membrane lipid metabolism; glycerophospholipid metabolism. Its function is as follows. Catalyzes the reduction of the glycolytic intermediate dihydroxyacetone phosphate (DHAP) to sn-glycerol 3-phosphate (G3P), the key precursor for phospholipid synthesis. The chain is Glycerol-3-phosphate dehydrogenase [NAD(P)+] from Helicobacter hepaticus (strain ATCC 51449 / 3B1).